A 507-amino-acid polypeptide reads, in one-letter code: ATP synthase subunit alpha, chloroplastic (507 aa).

170 to 177 (GDRQTGKT) is a binding site for ATP.

The protein belongs to the ATPase alpha/beta chains family. F-type ATPases have 2 components, CF(1) - the catalytic core - and CF(0) - the membrane proton channel. CF(1) has five subunits: alpha(3), beta(3), gamma(1), delta(1), epsilon(1). CF(0) has four main subunits: a, b, b' and c.

It is found in the plastid. The protein resides in the chloroplast thylakoid membrane. It carries out the reaction ATP + H2O + 4 H(+)(in) = ADP + phosphate + 5 H(+)(out). Produces ATP from ADP in the presence of a proton gradient across the membrane. The alpha chain is a regulatory subunit. The chain is ATP synthase subunit alpha, chloroplastic from Illicium oligandrum (Star anise).